The primary structure comprises 400 residues: Coenzyme A biosynthesis bifunctional protein CoaBC (400 aa).

Positions M1–N190 are phosphopantothenoylcysteine decarboxylase. C158 serves as the catalytic Proton donor. A phosphopantothenate--cysteine ligase region spans residues V191–L400. Residues G273–A275, D279, K289, P305–I308, F324, K338, and K342 contribute to the CTP site.

It in the N-terminal section; belongs to the HFCD (homo-oligomeric flavin containing Cys decarboxylase) superfamily. The protein in the C-terminal section; belongs to the PPC synthetase family. It depends on Mg(2+) as a cofactor. Requires FMN as cofactor.

It catalyses the reaction N-[(R)-4-phosphopantothenoyl]-L-cysteine + H(+) = (R)-4'-phosphopantetheine + CO2. The catalysed reaction is (R)-4'-phosphopantothenate + L-cysteine + CTP = N-[(R)-4-phosphopantothenoyl]-L-cysteine + CMP + diphosphate + H(+). It participates in cofactor biosynthesis; coenzyme A biosynthesis; CoA from (R)-pantothenate: step 2/5. The protein operates within cofactor biosynthesis; coenzyme A biosynthesis; CoA from (R)-pantothenate: step 3/5. Functionally, catalyzes two sequential steps in the biosynthesis of coenzyme A. In the first step cysteine is conjugated to 4'-phosphopantothenate to form 4-phosphopantothenoylcysteine. In the second step the latter compound is decarboxylated to form 4'-phosphopantotheine. The protein is Coenzyme A biosynthesis bifunctional protein CoaBC of Haemophilus influenzae (strain ATCC 51907 / DSM 11121 / KW20 / Rd).